The following is a 932-amino-acid chain: Leucine--tRNA ligase (932 aa).

Positions 38–48 match the 'HIGH' region motif; it reads PYLNGNLHAGH. The 'KMSKS' region signature appears at 630-634; that stretch reads KMSKS. An ATP-binding site is contributed by lysine 633.

This sequence belongs to the class-I aminoacyl-tRNA synthetase family.

Its subcellular location is the cytoplasm. It carries out the reaction tRNA(Leu) + L-leucine + ATP = L-leucyl-tRNA(Leu) + AMP + diphosphate. The sequence is that of Leucine--tRNA ligase from Archaeoglobus fulgidus (strain ATCC 49558 / DSM 4304 / JCM 9628 / NBRC 100126 / VC-16).